Reading from the N-terminus, the 487-residue chain is 4-alpha-glucanotransferase (487 aa).

It belongs to the disproportionating enzyme family.

The protein resides in the cytoplasm. It carries out the reaction Transfers a segment of a (1-&gt;4)-alpha-D-glucan to a new position in an acceptor, which may be glucose or a (1-&gt;4)-alpha-D-glucan.. Catalyzes a disproportionation reaction in which single or multiple glucose units from oligosaccharides are transferred to the 4-hydroxyl group of acceptor sugars. Glucose, maltose and maltotriose can act as acceptor, whereas of the three only maltotriose can act as donor. This is 4-alpha-glucanotransferase (malQ) from Clostridium butyricum.